The sequence spans 63 residues: Chymotrypsin/elastase isoinhibitor 1 (63 aa).

5 disulfide bridges follow: Cys5/Cys38, Cys14/Cys33, Cys17/Cys29, Cys21/Cys60, and Cys40/Cys54. Positions 5-60 (CGPNEVWTECTGCEMKCGPDENTPCPLMCRRPSCECSPGRGMRRTNDGKCIPASQC) constitute a TIL domain.

It belongs to the serine protease inhibitor-like (TIL domain-containing) family.

Its subcellular location is the secreted. Defends the organism against the host's proteinases. This is Chymotrypsin/elastase isoinhibitor 1 from Ascaris suum (Pig roundworm).